The following is a 512-amino-acid chain: Sporulation-regulated protein 3 (512 aa).

Positions 31–68 are disordered; it reads RQSSQGQYAVDSHPPKSPELKHRRQRSSSFVNGKCRNR. The Septin-type G domain occupies 106 to 365; sequence NGIDFTLMVA…EKCRSEMLRT (260 aa). The G1 motif stretch occupies residues 116–123; it reads GQSGLGKT. GTP contacts are provided by residues 116–123, glycine 168, 247–255, and arginine 315; these read GQSGLGKT and KSDLLTKEE. The interval 165–168 is G3 motif; the sequence is DTPG. Residues 246–249 are G4 motif; that stretch reads AKSD. Coiled-coil stretches lie at residues 376–406 and 451–496; these read TKSV…LKNY and RDWK…KSSN.

The protein belongs to the TRAFAC class TrmE-Era-EngA-EngB-Septin-like GTPase superfamily. Septin GTPase family. Interacts with other septin proteins such as SPR28 to form a ring at the bud neck.

It localises to the prospore membrane. The protein localises to the bud neck. Functionally, septins are GTPases involved in cytokinesis that assemble into filaments and form a ring at the cleavage site. May act by recruiting MYO1 and HOF1, a protein involved in septation, to the site of cleavage. Septins are also involved in cell morphogenesis, bud site selection, chitin deposition, cell cycle regulation, cell compartmentalization and spore wall formation. The chain is Sporulation-regulated protein 3 (SPR3) from Saccharomyces cerevisiae (strain ATCC 204508 / S288c) (Baker's yeast).